We begin with the raw amino-acid sequence, 313 residues long: tRNA dimethylallyltransferase (313 aa).

Position 11-18 (glycine 11–threonine 18) interacts with ATP. Substrate is bound at residue threonine 13–threonine 18. Interaction with substrate tRNA stretches follow at residues aspartate 36–leucine 39, glutamine 160–arginine 164, and arginine 241–arginine 246.

The protein belongs to the IPP transferase family. Monomer. It depends on Mg(2+) as a cofactor.

It carries out the reaction adenosine(37) in tRNA + dimethylallyl diphosphate = N(6)-dimethylallyladenosine(37) in tRNA + diphosphate. Its function is as follows. Catalyzes the transfer of a dimethylallyl group onto the adenine at position 37 in tRNAs that read codons beginning with uridine, leading to the formation of N6-(dimethylallyl)adenosine (i(6)A). In Haemophilus ducreyi (strain 35000HP / ATCC 700724), this protein is tRNA dimethylallyltransferase.